The sequence spans 332 residues: Glycine betaine-binding periplasmic protein OusX (332 aa).

An N-terminal signal peptide occupies residues 1 to 21; sequence MRNISMATLALTTVLSTGLFA.

The complex is composed of two ATP-binding proteins (OusV), two transmembrane proteins (OusW) and a solute-binding protein (OusX).

The protein resides in the periplasm. In terms of biological role, part of the OusB ABC transporter complex involved in glycine betaine and choline uptake. Binds glycine betaine. The protein is Glycine betaine-binding periplasmic protein OusX of Dickeya dadantii (strain 3937) (Erwinia chrysanthemi (strain 3937)).